A 403-amino-acid chain; its full sequence is SH3 and cysteine-rich domain-containing protein (403 aa).

Residues 1 to 51 (MIPPSGAREDSGDGLTGEATGTEQPPSPASTSSLESKLQKLKRSLSFKTKS) form a disordered region. The span at 19-36 (ATGTEQPPSPASTSSLES) shows a compositional bias: polar residues. Residues 39–51 (QKLKRSLSFKTKS) show a composition bias toward basic residues. The segment at 108–160 (LHAFQEHVFKKPTFCDVCNHMIVGTHAKHGLRCGACKMSIHHKCADGLAPQRC) adopts a Phorbol-ester/DAG-type zinc-finger fold. Residues 212 to 264 (QRTKKGGSGSGSDSPPRTSTSELVDVPEEADGPGDGSDMRTRSNSVFTYPENG) form a disordered region. Low complexity predominate over residues 222-232 (GSDSPPRTSTS). 2 consecutive SH3 domains span residues 286-345 (LQMN…RVEE) and 348-403 (KIYR…LVDV).

Interacts (via SH3 domains) with CACNA1S. Interacts with CACNA1H. Interacts with CACNA1C. In terms of tissue distribution, expressed predominantly in brain Detected in brain neurons, more specifically in hippocampus, cerebellum and inferior olive. Highly expressed in urinary bladder, and detected at lower levels in adrenal gland. Detected at very low levels in heart, liver, lung and kidney.

Its subcellular location is the cytoplasm. The protein resides in the cytosol. It localises to the cell membrane. The protein localises to the sarcolemma. Its function is as follows. Promotes expression of the ion channel CACNA1H at the cell membrane, and thereby contributes to the regulation of channel activity. Plays a minor and redundant role in promoting the expression of calcium channel CACNA1S at the cell membrane, and thereby contributes to increased channel activity. Slows the rate of calcium-mediated inactivation of CACNA1C calcium channel activity. The protein is SH3 and cysteine-rich domain-containing protein of Mus musculus (Mouse).